A 1169-amino-acid chain; its full sequence is Phospholipid-transporting ATPase IF (1169 aa).

Residues 1–47 (LGFDPPHQSDTRTIYIANRFPQNGLYTPQKFIDNRIISSKYTVWNFV) are Cytoplasmic-facing. A helical transmembrane segment spans residues 48–69 (PKNLFEQFRRVANFYFLIIFLV). Residues 70–74 (QLMID) are Extracellular-facing. Residues 75 to 96 (TPTSPITSGLPLFFVITVTAIK) traverse the membrane as a helical segment. At 97–281 (QGYEDWLRHN…SAVEKSMNTF (185 aa)) the chain is on the cytoplasmic side. Residues 282-303 (LIIYLIILISEAIISTILKYTW) traverse the membrane as a helical segment. Residues 304–333 (QAEEKWDEPWYNQKTEHQRNSSKILRFISD) lie on the Extracellular side of the membrane. A helical membrane pass occupies residues 334 to 351 (FLAFLVLYNFIIPISLYV). Residues 352–868 (TVEMQKFLGS…HGHFYYIRIA (517 aa)) are Cytoplasmic-facing. Asp399 functions as the 4-aspartylphosphate intermediate in the catalytic mechanism. Positions 399, 400, 401, 523, 564, 587, 618, 698, 699, 700, 786, and 792 each coordinate ATP. Asp399 contributes to the Mg(2+) binding site. Thr401 serves as a coordination point for Mg(2+). A required for binding to the RING-finger of HLTF region spans residues 794–802 (KVIRLIKIS). Asp813 is a Mg(2+) binding site. ATP is bound by residues Asn816 and Asp817. Position 817 (Asp817) interacts with Mg(2+). The helical transmembrane segment at 869 to 890 (TLVQYFFYKNVCFITPQFLYQF) threads the bilayer. The Extracellular portion of the chain corresponds to 891-902 (YCLFSQQTLYDS). The helical transmembrane segment at 903-922 (VYLTLYNICFTSLPILIYSL) threads the bilayer. Residues 923–952 (LEQHIDPHILQNKPTLYRDISKNRLLSIKT) lie on the Cytoplasmic side of the membrane. The chain crosses the membrane as a helical span at residues 953–974 (FLYWTILGFSRSFIFLFGSYFL). Over 975-989 (IGKDASLLGNGQMFG) the chain is Extracellular. Residues 990–1012 (NWTFGTLVFTVMVITVTVKMALE) traverse the membrane as a helical segment. Residues 1013 to 1017 (THFWT) are Cytoplasmic-facing. The chain crosses the membrane as a helical span at residues 1018–1039 (WINHLVTWGSIIFYFVFSLFYG). The Extracellular segment spans residues 1040 to 1057 (GILWPFLGSQNMYFVFIQ). The chain crosses the membrane as a helical span at residues 1058-1082 (LVSSGSAWFAIILMVVTCLFLDVMK). Over 1083 to 1169 (KVFDRQLHPT…TLSTMDSSTC (87 aa)) the chain is Cytoplasmic. The residue at position 1146 (Ser1146) is a Phosphoserine.

The protein belongs to the cation transport ATPase (P-type) (TC 3.A.3) family. Type IV subfamily. As to quaternary structure, component of a P4-ATPase flippase complex which consists of a catalytic alpha subunit ATP11B and an accessory beta subunit TMEM30A. Interacts with HLTF (via the RING-finger). The cofactor is Mg(2+). In terms of tissue distribution, ubiquitously expressed.

It localises to the recycling endosome membrane. It is found in the early endosome. The protein resides in the endoplasmic reticulum. Its subcellular location is the golgi apparatus. The protein localises to the trans-Golgi network. It localises to the nucleus inner membrane. It carries out the reaction ATP + H2O + phospholipidSide 1 = ADP + phosphate + phospholipidSide 2.. It catalyses the reaction a 1,2-diacyl-sn-glycero-3-phospho-L-serine(out) + ATP + H2O = a 1,2-diacyl-sn-glycero-3-phospho-L-serine(in) + ADP + phosphate + H(+). The enzyme catalyses a 1,2-diacyl-sn-glycero-3-phosphoethanolamine(out) + ATP + H2O = a 1,2-diacyl-sn-glycero-3-phosphoethanolamine(in) + ADP + phosphate + H(+). Its function is as follows. Catalytic component of a P4-ATPase flippase complex which catalyzes the hydrolysis of ATP coupled to the transport of aminophospholipids, phosphatidylserines (PS) and phosphatidylethanolamines (PE), from the outer to the inner leaflet of intracellular membranes. May contribute to the maintenance of membrane lipid asymmetry in endosome compartment. Appears to play a role in the subnuclear trafficking of transcription factors with RING motifs. The protein is Phospholipid-transporting ATPase IF (ATP11B) of Oryctolagus cuniculus (Rabbit).